Consider the following 506-residue polypeptide: Cysteine--tRNA ligase (506 aa).

A Zn(2+)-binding site is contributed by Cys-34. Positions 36–46 (PTVYDFAHIGN) match the 'HIGH' region motif. Residues Cys-230, His-269, and Glu-273 each coordinate Zn(2+). The 'KMSKS' region motif lies at 302-306 (KMSKS). Lys-305 lines the ATP pocket.

This sequence belongs to the class-I aminoacyl-tRNA synthetase family. Monomer. It depends on Zn(2+) as a cofactor.

The protein localises to the cytoplasm. It catalyses the reaction tRNA(Cys) + L-cysteine + ATP = L-cysteinyl-tRNA(Cys) + AMP + diphosphate. In Brucella suis (strain ATCC 23445 / NCTC 10510), this protein is Cysteine--tRNA ligase.